A 379-amino-acid chain; its full sequence is Mannan endo-1,4-beta-mannosidase 7 (379 aa).

Substrate contacts are provided by Trp-64 and Asn-179. The active-site Proton donor is the Glu-180. Residue Tyr-260 coordinates substrate. Glu-300 acts as the Nucleophile in catalysis. Trp-342 serves as a coordination point for substrate.

This sequence belongs to the glycosyl hydrolase 5 (cellulase A) family. In terms of tissue distribution, expression not detected.

It carries out the reaction Random hydrolysis of (1-&gt;4)-beta-D-mannosidic linkages in mannans, galactomannans and glucomannans.. The protein is Mannan endo-1,4-beta-mannosidase 7 (MAN7) of Oryza sativa subsp. japonica (Rice).